The primary structure comprises 237 residues: Cytosolic-abundant heat soluble protein 1 (237 aa).

Basic and acidic residues-rich tracts occupy residues 1–17 (MPYEKHVEQTVVEKTEQ) and 91–105 (VDMRPSPKLAEEARR). Disordered regions lie at residues 1 to 35 (MPYEKHVEQTVVEKTEQPGHSSTHHAPAQRTVARE) and 85 to 105 (SGASTEVDMRPSPKLAEEARR). The stretch at 98-201 (KLAEEARRDA…KEALERSRMA (104 aa)) forms a coiled coil. CAHS motif stretches follow at residues 132 to 150 (YRHQTEAEAEKIRRELEKQ) and 169 to 187 (QKREVDLEAKMAKRELDRE). The segment at 212 to 237 (AGHTVSGGTTVSSVDKVETVRERKHH) is disordered. Basic and acidic residues predominate over residues 226–237 (DKVETVRERKHH).

It belongs to the Cytosolic-abundant heat soluble protein (CAHS) family.

The protein resides in the cytoplasm. The protein localises to the nucleus. Functionally, CAHS proteins are cytosolic heat soluble proteins that seem to contribute to the anhydrobiosis in tardigrades, but their specific mechanisms are yet to be identified. It is possible that protection during anhydrobiosis might occur via the stabilization of vitrifying small molecules such as sugars, but not via the direct glass transition of CAHS proteins themselves. The polypeptide is Cytosolic-abundant heat soluble protein 1 (Ramazzottius varieornatus (Water bear)).